Consider the following 295-residue polypeptide: Aquaporin-9 (295 aa).

Over 1-24 (MQPEGAEKGKSFKQRLVLKSSLAK) the chain is Cytoplasmic. A helical transmembrane segment spans residues 25–43 (ETLSEFLGTFILIVLGCGC). Over 44–57 (VAQAILSRGRFGGV) the chain is Extracellular. A helical transmembrane segment spans residues 58–77 (ITINVGFSMAVAMAIYVAGG). The Cytoplasmic portion of the chain corresponds to 78-79 (VS). Residues 80–92 (GGHINPAVSLAMC) constitute an intramembrane region (discontinuously helical). The short motif at 84–86 (NPA) is the NPA 1 element. Residues 93-98 (LFGRMK) are Cytoplasmic-facing. The chain crosses the membrane as a helical span at residues 99–123 (WFKLPFYVGAQFLGAFVGAATVFGI). Over 124–160 (YYDGLMSFAGGKLLIVGENATAHIFATYPAPYLSLAN) the chain is Extracellular. The helical transmembrane segment at 161–178 (AFADQVVATMILLIIVFA) threads the bilayer. At 179 to 190 (IFDSRNLGAPRG) the chain is on the cytoplasmic side. A helical transmembrane segment spans residues 191–207 (LEPIAIGLLIIVIASSL). The Extracellular segment spans residues 208-210 (GLN). The segment at residues 211–225 (SGCAMNPARDLSPRL) is an intramembrane region (discontinuously helical). The short motif at 216–218 (NPA) is the NPA 2 element. Residues 226–243 (FTALAGWGFEVFRAGNNF) lie on the Extracellular side of the membrane. Residues 244 to 264 (WWIPVVGPLVGAVIGGLIYVL) form a helical membrane-spanning segment. The Cytoplasmic portion of the chain corresponds to 265–295 (VIEIHHPEPDSVFKTEQSEDKPEKYELSVIM).

The protein belongs to the MIP/aquaporin (TC 1.A.8) family. Homotetramer; each monomer provides an independent glycerol/water pore. As to expression, highly expressed in peripheral leukocytes. Also expressed in liver, lung, and spleen.

The protein localises to the cell membrane. It localises to the basolateral cell membrane. The catalysed reaction is glycerol(in) = glycerol(out). It catalyses the reaction H2O(in) = H2O(out). The enzyme catalyses urea(in) = urea(out). It carries out the reaction (S)-lactate(in) = (S)-lactate(out). The catalysed reaction is NH4(+)(in) = NH4(+)(out). It catalyses the reaction uracil(in) = uracil(out). The enzyme catalyses adenine(out) = adenine(in). It carries out the reaction 3-hydroxybutanoate(in) = 3-hydroxybutanoate(out). The catalysed reaction is D-sorbitol(in) = D-sorbitol(out). It catalyses the reaction D-mannitol(in) = D-mannitol(out). The enzyme catalyses H2O2(out) = H2O2(in). It carries out the reaction arsenite(in) = arsenite(out). The catalysed reaction is selenite(in) = selenite(out). Aquaglyceroporins form homotetrameric transmembrane channels, with each monomer independently mediating glycerol and water transport across the plasma membrane along their osmotic gradient. AQP9 is the primary route for glycerol uptake in hepatocytes, supporting hepatic gluconeogenesis. It exhibits broad specificity and may transport various small, non-charged solutes, including carbamides, polyols, purines, and pyrimidines. AQP9 may also facilitate hepatic urea extrusion. Due to its permeability to lactate, AQP9 might participate in the astrocyte-to-neuron lactate shuttle, supplying neurons with energy. Additionally, AQP9 is permeable to arsenite, contributing to arsenic excretion by the liver and providing partial protection against arsenic toxicity. It is also permeable to H2O2 in vivo. Could also be permeable to ammonium. This chain is Aquaporin-9, found in Homo sapiens (Human).